A 318-amino-acid polypeptide reads, in one-letter code: Decaprenyl-phosphate phosphoribosyltransferase (318 aa).

A run of 2 helical transmembrane segments spans residues Trp-33 to Tyr-53 and Ala-59 to Ile-79. Positions 35 and 77 each coordinate 5-phospho-alpha-D-ribose 1-diphosphate. Positions 80 and 84 each coordinate Mg(2+). A 5-phospho-alpha-D-ribose 1-diphosphate-binding site is contributed by Lys-94. 2 consecutive transmembrane segments (helical) span residues Ile-99–Ala-119 and Leu-121–Val-141. 5-phospho-alpha-D-ribose 1-diphosphate-binding residues include Lys-150 and Arg-167. The next 2 helical transmembrane spans lie at Ala-153–Val-173 and Ile-177–Gly-197. Position 198 (Lys-198) interacts with trans,octa-cis-decaprenyl phosphate. A run of 3 helical transmembrane segments spans residues Leu-225 to Phe-245, Ser-262 to Ile-282, and Arg-298 to Ser-318.

Belongs to the UbiA prenyltransferase family. DPPR synthase subfamily. Requires Mg(2+) as cofactor.

The protein localises to the cell inner membrane. The catalysed reaction is trans,octa-cis-decaprenyl phosphate + 5-phospho-alpha-D-ribose 1-diphosphate + H(+) = trans,octa-cis-decaprenylphospho-beta-D-ribofuranose 5-phosphate + diphosphate. It functions in the pathway cell wall biogenesis; cell wall polysaccharide biosynthesis. Involved in the biosynthesis of decaprenylphosphoryl arabinose (DPA) a precursor for arabinan synthesis in mycobacterial cell wall biosynthesis. Catalyzes the transfer of a 5-phosphoribosyl residue from phosphoribose diphosphate (PRPP) to decaprenyl phosphate (DP) to form decaprenylphosphoryl-5-phosphoribose (DPPR). This Mycolicibacterium smegmatis (strain ATCC 700084 / mc(2)155) (Mycobacterium smegmatis) protein is Decaprenyl-phosphate phosphoribosyltransferase.